The following is a 375-amino-acid chain: Putative ZDHHC-type palmitoyltransferase 8 (375 aa).

Transmembrane regions (helical) follow at residues 4–24 (LFDF…TDFL) and 40–60 (VVGM…VSLW). N-linked (GlcNAc...) asparagine glycosylation is present at Asn-95. 3 helical membrane-spanning segments follow: residues 105–125 (ITFY…YYYY), 221–241 (FILF…LSFF), and 285–305 (YSFI…ILLF). The region spanning 176–226 (VSDGKWSTINKPKSHHCRICKRCIDSMDHHCPFAANCIGINNHHYFILFIG) is the DHHC domain. An N-linked (GlcNAc...) asparagine glycan is attached at Asn-343.

It belongs to the DHHC palmitoyltransferase family.

It is found in the membrane. It carries out the reaction L-cysteinyl-[protein] + hexadecanoyl-CoA = S-hexadecanoyl-L-cysteinyl-[protein] + CoA. The protein is Putative ZDHHC-type palmitoyltransferase 8 of Dictyostelium discoideum (Social amoeba).